The chain runs to 297 residues: Probable endonuclease 4 (297 aa).

Zn(2+)-binding residues include His-69, His-110, Glu-145, Asp-179, His-182, His-214, Asp-227, His-229, and Glu-259.

Belongs to the AP endonuclease 2 family. It depends on Zn(2+) as a cofactor.

It carries out the reaction Endonucleolytic cleavage to 5'-phosphooligonucleotide end-products.. Functionally, endonuclease IV plays a role in DNA repair. It cleaves phosphodiester bonds at apurinic or apyrimidinic (AP) sites, generating a 3'-hydroxyl group and a 5'-terminal sugar phosphate. This is Probable endonuclease 4 from Bacillus velezensis (strain DSM 23117 / BGSC 10A6 / LMG 26770 / FZB42) (Bacillus amyloliquefaciens subsp. plantarum).